Consider the following 172-residue polypeptide: Crossover junction endodeoxyribonuclease RuvC (172 aa).

Active-site residues include aspartate 12, glutamate 71, and aspartate 143. Mg(2+)-binding residues include aspartate 12, glutamate 71, and aspartate 143.

The protein belongs to the RuvC family. Homodimer which binds Holliday junction (HJ) DNA. The HJ becomes 2-fold symmetrical on binding to RuvC with unstacked arms; it has a different conformation from HJ DNA in complex with RuvA. In the full resolvosome a probable DNA-RuvA(4)-RuvB(12)-RuvC(2) complex forms which resolves the HJ. The cofactor is Mg(2+).

The protein resides in the cytoplasm. It carries out the reaction Endonucleolytic cleavage at a junction such as a reciprocal single-stranded crossover between two homologous DNA duplexes (Holliday junction).. Its function is as follows. The RuvA-RuvB-RuvC complex processes Holliday junction (HJ) DNA during genetic recombination and DNA repair. Endonuclease that resolves HJ intermediates. Cleaves cruciform DNA by making single-stranded nicks across the HJ at symmetrical positions within the homologous arms, yielding a 5'-phosphate and a 3'-hydroxyl group; requires a central core of homology in the junction. The consensus cleavage sequence is 5'-(A/T)TT(C/G)-3'. Cleavage occurs on the 3'-side of the TT dinucleotide at the point of strand exchange. HJ branch migration catalyzed by RuvA-RuvB allows RuvC to scan DNA until it finds its consensus sequence, where it cleaves and resolves the cruciform DNA. This chain is Crossover junction endodeoxyribonuclease RuvC, found in Coxiella burnetii (strain CbuG_Q212) (Coxiella burnetii (strain Q212)).